The primary structure comprises 165 residues: Large ribosomal subunit protein uL10 (165 aa).

It belongs to the universal ribosomal protein uL10 family. As to quaternary structure, part of the ribosomal stalk of the 50S ribosomal subunit. The N-terminus interacts with L11 and the large rRNA to form the base of the stalk. The C-terminus forms an elongated spine to which L12 dimers bind in a sequential fashion forming a multimeric L10(L12)X complex.

In terms of biological role, forms part of the ribosomal stalk, playing a central role in the interaction of the ribosome with GTP-bound translation factors. The sequence is that of Large ribosomal subunit protein uL10 from Mycoplasmopsis synoviae (strain 53) (Mycoplasma synoviae).